A 302-amino-acid polypeptide reads, in one-letter code: DNA-binding transcriptional activator HetR (302 aa).

S153 is a catalytic residue.

The protein belongs to the peptidase S48 family. As to quaternary structure, homodimer; disulfide-linked.

Functionally, might be involved in temporal and/or spatial regulation of nitrogen fixation. Dimerization is required for DNA-binding. Has both a protease and a DNA-binding activity. This chain is DNA-binding transcriptional activator HetR, found in Trichodesmium erythraeum (strain IMS101).